We begin with the raw amino-acid sequence, 396 residues long: Elongation factor Tu 1 (396 aa).

Residues 10-206 (KPHVNVGTIG…ALDTYIPTPK (197 aa)) form the tr-type G domain. A G1 region spans residues 19-26 (GHVDHGKT). A GTP-binding site is contributed by 19–26 (GHVDHGKT). Mg(2+) is bound at residue T26. The segment at 60 to 64 (GITIS) is G2. A G3 region spans residues 81–84 (DCPG). GTP-binding positions include 81-85 (DCPGH) and 136-139 (NKAD). The segment at 136–139 (NKAD) is G4. The G5 stretch occupies residues 174 to 176 (SAL).

It belongs to the TRAFAC class translation factor GTPase superfamily. Classic translation factor GTPase family. EF-Tu/EF-1A subfamily. As to quaternary structure, monomer.

Its subcellular location is the cytoplasm. It catalyses the reaction GTP + H2O = GDP + phosphate + H(+). Its function is as follows. GTP hydrolase that promotes the GTP-dependent binding of aminoacyl-tRNA to the A-site of ribosomes during protein biosynthesis. In Ruthia magnifica subsp. Calyptogena magnifica, this protein is Elongation factor Tu 1.